The chain runs to 546 residues: Cation/calcium exchanger 5 (546 aa).

13 consecutive transmembrane segments (helical) span residues 13–33 (ALCL…TTIP), 88–108 (NLFF…YILI), 134–154 (AVTL…VAAL), 163–183 (FGAI…FVAI), 194–214 (SFVR…YVYL), 218–238 (IFVW…GFVF), 323–343 (SANI…FVQL), 356–376 (LPLW…HFTV), 388–408 (VIVV…GELL), 423–445 (ALLG…DVAV), 455–475 (MAGC…SALV), 492–512 (VGIV…LLVI), and 522–542 (FWGI…LIIA).

It belongs to the Ca(2+):cation antiporter (CaCA) (TC 2.A.19) family. Cation/calcium exchanger (CCX) subfamily.

Its subcellular location is the cell membrane. In terms of biological role, membrane-localized H(+)-dependent K(+) and Na(+) transporter. This Arabidopsis thaliana (Mouse-ear cress) protein is Cation/calcium exchanger 5 (CCX5).